Consider the following 296-residue polypeptide: Cytidine deaminase (296 aa).

2 CMP/dCMP-type deaminase domains span residues 47 to 167 (TEAE…FGPK) and 186 to 296 (DSSD…VDPV). Position 88–90 (88–90 (NLE)) interacts with substrate. Zn(2+) is bound at residue His101. The active-site Proton donor is Glu103. The Zn(2+) site is built by Cys128 and Cys131.

Belongs to the cytidine and deoxycytidylate deaminase family. As to quaternary structure, homodimer. The cofactor is Zn(2+).

The enzyme catalyses cytidine + H2O + H(+) = uridine + NH4(+). The catalysed reaction is 2'-deoxycytidine + H2O + H(+) = 2'-deoxyuridine + NH4(+). Functionally, this enzyme scavenges exogenous and endogenous cytidine and 2'-deoxycytidine for UMP synthesis. The protein is Cytidine deaminase of Shewanella sp. (strain MR-7).